The primary structure comprises 110 residues: Phosphoribosyl-ATP pyrophosphatase (110 aa).

It belongs to the PRA-PH family.

Its subcellular location is the cytoplasm. The catalysed reaction is 1-(5-phospho-beta-D-ribosyl)-ATP + H2O = 1-(5-phospho-beta-D-ribosyl)-5'-AMP + diphosphate + H(+). It participates in amino-acid biosynthesis; L-histidine biosynthesis; L-histidine from 5-phospho-alpha-D-ribose 1-diphosphate: step 2/9. The protein is Phosphoribosyl-ATP pyrophosphatase of Hahella chejuensis (strain KCTC 2396).